The primary structure comprises 476 residues: Adenosylhomocysteinase (476 aa).

Substrate is bound by residues Thr-65, Asp-140, and Glu-201. Position 202-204 (202-204 (TTT)) interacts with NAD(+). Residues Lys-231 and Asp-235 each coordinate substrate. Residues Asn-236, 265-270 (GYGDVG), Glu-288, Asn-323, 344-346 (IGH), and Asn-392 contribute to the NAD(+) site.

The protein belongs to the adenosylhomocysteinase family. The cofactor is NAD(+).

The protein localises to the cytoplasm. It carries out the reaction S-adenosyl-L-homocysteine + H2O = L-homocysteine + adenosine. It functions in the pathway amino-acid biosynthesis; L-homocysteine biosynthesis; L-homocysteine from S-adenosyl-L-homocysteine: step 1/1. May play a key role in the regulation of the intracellular concentration of adenosylhomocysteine. This is Adenosylhomocysteinase from Bacteroides thetaiotaomicron (strain ATCC 29148 / DSM 2079 / JCM 5827 / CCUG 10774 / NCTC 10582 / VPI-5482 / E50).